A 406-amino-acid polypeptide reads, in one-letter code: Tryptophan 2,3-dioxygenase (406 aa).

A Phosphoserine modification is found at S19. Residues 72–76 (FIITH) and R144 each bind substrate. Residue H328 coordinates heme. Position 342 (T342) interacts with substrate.

The protein belongs to the tryptophan 2,3-dioxygenase family. In terms of assembly, homotetramer. Dimer of dimers. It depends on heme as a cofactor.

The enzyme catalyses L-tryptophan + O2 = N-formyl-L-kynurenine. It participates in amino-acid degradation; L-tryptophan degradation via kynurenine pathway; L-kynurenine from L-tryptophan: step 1/2. Its function is as follows. Heme-dependent dioxygenase that catalyzes the oxidative cleavage of the L-tryptophan (L-Trp) pyrrole ring and converts L-tryptophan to N-formyl-L-kynurenine. Catalyzes the oxidative cleavage of the indole moiety. This is Tryptophan 2,3-dioxygenase from Bos taurus (Bovine).